The chain runs to 92 residues: Small ribosomal subunit protein uS19 (92 aa).

This sequence belongs to the universal ribosomal protein uS19 family.

Protein S19 forms a complex with S13 that binds strongly to the 16S ribosomal RNA. This is Small ribosomal subunit protein uS19 from Corynebacterium aurimucosum (strain ATCC 700975 / DSM 44827 / CIP 107346 / CN-1) (Corynebacterium nigricans).